Here is a 1162-residue protein sequence, read N- to C-terminus: Leptin receptor (1162 aa).

An N-terminal signal peptide occupies residues 1 to 21; the sequence is MTCQKFYVVLLHWEFLYVITA. Residues 22–839 are Extracellular-facing; that stretch reads LNLAYPTSPW…DIAKQQNDAG (818 aa). Intrachain disulfides connect Cys37-Cys90, Cys89-Cys99, Cys131-Cys142, Cys186-Cys195, and Cys188-Cys193. Asn55, Asn56, Asn73, and Asn98 each carry an N-linked (GlcNAc...) asparagine glycan. Asn187 carries N-linked (GlcNAc...) asparagine glycosylation. Residues 238–331 form the Fibronectin type-III 1 domain; it reads PPLGLRMEVT…LPQLFTTQDV (94 aa). 3 N-linked (GlcNAc...) asparagine glycosylation sites follow: Asn275, Asn345, and Asn356. 2 cysteine pairs are disulfide-bonded: Cys350–Cys410 and Cys411–Cys416. Asn431 carries N-linked (GlcNAc...) asparagine glycosylation. 3 disulfides stabilise this stretch: Cys434–Cys445, Cys471–Cys526, and Cys486–Cys496. Residues 465–482 are leptin-binding; the sequence is HRRSLYCPDNPSIRPTSE. Asn514, Asn622, Asn657, Asn668, Asn686, Asn695, Asn698, and Asn726 each carry an N-linked (GlcNAc...) asparagine glycan. Fibronectin type-III domains lie at 537–632, 637–729, and 738–831; these read PPSN…TLVM, PMRG…NLTF, and AVQS…KDDI. The short motif at 620-624 is the WSXWS motif element; that stretch reads WSNWS. A helical transmembrane segment spans residues 840 to 860; it reads LYVIVPIIISSCVLLLGTLLI. The Cytoplasmic segment spans residues 861-1162; sequence SHQRMKKLFW…IENKMCDLTV (302 aa). The short motif at 869-877 is the Box 1 motif element; it reads FWDDVPNPK. Ser880 is subject to Phosphoserine. The segment at 891–896 is required for JAK2 activation; sequence ETFEHL. A required for STAT3 phosphorylation region spans residues 896–904; sequence LFTKHAESV. Tyr985 carries the post-translational modification Phosphotyrosine; by JAK2. Residue Tyr1077 is modified to Phosphotyrosine. At Tyr1138 the chain carries Phosphotyrosine; by JAK2.

The protein belongs to the type I cytokine receptor family. Type 2 subfamily. As to quaternary structure, present as a mixture of monomers and dimers. The phosphorylated receptor binds a number of SH2 domain-containing proteins such as JAK2, STAT3, PTPN11, and SOCS3. Interaction with SOCS3 inhibits JAK/STAT signaling and MAPK cascade. On ligand binding, phosphorylated on two conserved C-terminal tyrosine residues (isoform B only) by JAK2. Tyr-985 is required for complete binding and activation of PTPN11, ERK/FOS activation,for interaction with SOCS3 and SOCS3 mediated inhibition of leptin signaling. Phosphorylation on Tyr-1138 is required for STAT3 binding/activation. Phosphorylation of Tyr-1077 has a more accessory role. Isoform B is expressed in kidney, liver, lung, ovary, spleen and uterus. Increased level in uterus during gestation. Isoform A and isoform C are predominantly expressed in cerebral microvessels and choroid plexus, with lower levels in cortex, cerebellum and hypothalamus but also liver and lung. Isoform F is expressed at high levels in brain, liver and spleen and less in stomach, kidney, thymus, heart, lung and hypothalamus.

Its subcellular location is the cell membrane. The protein resides in the basolateral cell membrane. The protein localises to the secreted. In terms of biological role, receptor for hormone LEP/leptin. On ligand binding, mediates LEP central and peripheral effects through the activation of different signaling pathways such as JAK2/STAT3 and MAPK cascade/FOS. In the hypothalamus, LEP acts as an appetite-regulating factor that induces a decrease in food intake and an increase in energy consumption by inducing anorexinogenic factors and suppressing orexigenic neuropeptides, also regulates bone mass and secretion of hypothalamo-pituitary-adrenal hormones. In the periphery, increases basal metabolism, influences reproductive function, regulates pancreatic beta-cell function and insulin secretion, is pro-angiogenic and affects innate and adaptive immunity. Control of energy homeostasis and melanocortin production (stimulation of POMC and full repression of AgRP transcription) is mediated by STAT3 signaling, whereas distinct signals regulate NPY and the control of fertility, growth and glucose homeostasis. Involved in the regulation of counter-regulatory response to hypoglycemia by inhibiting neurons of the parabrachial nucleus. Has a specific effect on T lymphocyte responses, differentially regulating the proliferation of naive and memory T-cells. Leptin increases Th1 and suppresses Th2 cytokine production. May transport LEP across the blood-brain barrier. Binds LEP and mediates LEP endocytosis. Does not induce phosphorylation of and activate STAT3. Functionally, antagonizes Isoform A and isoform B-mediated LEP binding and endocytosis. The chain is Leptin receptor (Lepr) from Rattus norvegicus (Rat).